The chain runs to 302 residues: MDGGYDQSGGASRYFHNLFRPELHHQLQPQPQLHPLPQPQPQPQPQQQNSDDESDSNKDPGSDPVTSGSTGKRPRGRPPGSKNKPKPPVIVTRDSPNVLRSHVLEVSSGADIVESVTTYARRRGRGVSILSGNGTVANVSLRQPATTAAHGANGGTGGVVALHGRFEILSLTGTVLPPPAPPGSGGLSIFLSGVQGQVIGGNVVAPLVASGPVILMAASFSNATFERLPLEDEGGEGGEGGEVGEGGGGEGGPPPATSSSPPSGAGQGQLRGNMSGYDQFAGDPHLLGWGAAAAAAPPRPAF.

Residues 1 to 95 (MDGGYDQSGG…KPPVIVTRDS (95 aa)) are disordered. Positions 32–44 (QLHPLPQPQPQPQ) are enriched in pro residues. The a.T hook DNA-binding region spans 72–84 (KRPRGRPPGSKNK). One can recognise a PPC domain in the interval 96–241 (PNVLRSHVLE…DEGGEGGEGG (146 aa)). The required for the binding to non-AHL interactors stretch occupies residues 164-169 (GRFEIL). A disordered region spans residues 229-279 (PLEDEGGEGGEGGEVGEGGGGEGGPPPATSSSPPSGAGQGQLRGNMSGYDQ). Gly residues predominate over residues 237-251 (GGEGGEVGEGGGGEG).

In terms of assembly, homodimer. Interacts with AHL5, AHL12, AHL25, AHL27, TCP4, TCP13 and EF114. As to expression, expressed in the hypocotyl and the vascular tissue of seedling.

Its subcellular location is the nucleus. Transcription factor that specifically binds AT-rich DNA sequences related to the nuclear matrix attachment regions (MARs). Acts redundantly with AHL18, AHL22 and AHL27 in the regulation of flowering and regulation of the hypocotyl elongation. Acts redundantly with AHL27/ESC to modulate hypocotyl growth inhibition in response to light. The polypeptide is AT-hook motif nuclear-localized protein 29 (Arabidopsis thaliana (Mouse-ear cress)).